Consider the following 1105-residue polypeptide: MTVTKPRSVQGRHISRYDWVPAAAGWAVGVIATLSLLASISPLVRWIIKVPREFINSYLFNFPDTSFAWSFVLALLAAALAARKRIAWLLLLTNVVLAAFLNAADIAAGGNTAAQNFGENLGFAVHVVAIVVLVLGYRQFWAKVRRGALFKAAAVLVAGGAIGILVSWGLVELFPGSLAPHDRLPYVANRVIGFALADPDLFTGRPHVFLNAMFGLFGALALIAATIVLFQSQRADNALTGEDESAIRGLLELYGNSDSLGYFATRRDKSVIFASSGRAAITYRVEIGVCLASGDPVGDPRSWPQAIDAWLRLCQTYGWSPGVMGASSQGAKAYREAGLNALELGDEAILVPADFTLSGPDMRGVRQAVTRARRAGLTVRIRRHRDISDAEMEQTIDRADGWRDTESERGFSMALGRLGDPADTDCLLVEALDPDDLVVAMLSLVPWGTSGVSLDLMRRSPQSPNGTIELMVSELALRAEGLGISRISLNFAMFRSAFEQGAQLGAGPVARLWRWLLVFFSRWWQIETLYRSNQKYQPQWVPRYACYEDARVIPKVGVASVIAEGFLVLPFSRRNKVHTGHHPAVPERLAATGLLHHDGSAPDVSGLRQSAIADGDDPQRRLPEQVRVRLNKLKKLRSSGIDAYPVGEPPTHTVAQAMDADDQASVSVSGRILRVRNYGGVLFAHLRDWSGEIQVLLDNSRLEQGRAADFNAAIDLGDLVEMTGQMGSSKTGTRSLIVRRWRLIGKCLRPLPNKWKGLTDPEARVRTRYVDLAVNAESRALITARSAVLRSVRETLSAKGFIEVETPILQQVHGGATARPFITHINTYSMDLFLRIAPELYLKRLCVGGVERVFELGRAFRNEGVDFSHNPEFTLLEAYQAHADYRVWIDSCRELIQNAAQAANGAPVAMRPAGGGRLEPVDISGVWAVKTVHDAVSEALGEQIDADTDLATLRRLADAARIPYRAQWDAGAVVLELYEHLVESRTEQPTFYLDFPTSVSPLTRPHRSKPGIAERWDLVAWGVELGTAYSELTDPVEQRLRLEEQSLLAAGGDPEAMQLDEDFLQAMEYAMPPTGGLGMGVDRVVMLITGRSIRETLPFPLAKPH.

The tract at residues 1-603 (MTVTKPRSVQ…LLHHDGSAPD (603 aa)) is phosphatidylglycerol lysyltransferase. 7 helical membrane-spanning segments follow: residues 20 to 40 (VPAAAGWAVGVIATLSLLASI), 62 to 82 (FPDTSFAWSFVLALLAAALAA), 86 to 106 (IAWLLLLTNVVLAAFLNAADI), 117 to 137 (FGENLGFAVHVVAIVVLVLGY), 154 to 174 (AVLVAGGAIGILVSWGLVELF), 186 to 203 (YVANRVIGFALADPDLFT), and 208 to 228 (VFLNAMFGLFGALALIAATIV). The lysine--tRNA ligase stretch occupies residues 604 to 1105 (VSGLRQSAIA…TLPFPLAKPH (502 aa)). Asp1017 and Glu1024 together coordinate Mg(2+).

In the N-terminal section; belongs to the LPG synthetase family. This sequence in the C-terminal section; belongs to the class-II aminoacyl-tRNA synthetase family. The cofactor is Mg(2+).

It is found in the cell membrane. The enzyme catalyses tRNA(Lys) + L-lysine + ATP = L-lysyl-tRNA(Lys) + AMP + diphosphate. It carries out the reaction L-lysyl-tRNA(Lys) + a 1,2-diacyl-sn-glycero-3-phospho-(1'-sn-glycerol) = a 1,2-diacyl-sn-glycero-3-phospho-1'-(3'-O-L-lysyl)-sn-glycerol + tRNA(Lys). In terms of biological role, catalyzes the production of L-lysyl-tRNA(Lys)transfer and the transfer of a lysyl group from L-lysyl-tRNA(Lys) to membrane-bound phosphatidylglycerol (PG), which produces lysylphosphatidylglycerol (LPG), one of the components of the bacterial membrane with a positive net charge. LPG synthesis contributes to the resistance to cationic antimicrobial peptides (CAMPs) and likely protects M.tuberculosis against the CAMPs produced by competiting microorganisms (bacteriocins). In fact, the modification of anionic phosphatidylglycerol with positively charged L-lysine results in repulsion of the peptides. In Mycobacterium marinum (strain ATCC BAA-535 / M), this protein is Lysylphosphatidylglycerol biosynthesis bifunctional protein LysX (lysX).